Reading from the N-terminus, the 534-residue chain is O-phosphoserine--tRNA(Cys) ligase (534 aa).

Residues 186–188 (HMT), 231–233 (SAS), 273–274 (YY), and Asn-325 contribute to the substrate site.

The protein belongs to the class-II aminoacyl-tRNA synthetase family. O-phosphoseryl-tRNA(Cys) synthetase subfamily. Homotetramer. Interacts with SepCysS.

It carries out the reaction tRNA(Cys) + O-phospho-L-serine + ATP = O-phospho-L-seryl-tRNA(Cys) + AMP + diphosphate. Its function is as follows. Catalyzes the attachment of O-phosphoserine (Sep) to tRNA(Cys). The protein is O-phosphoserine--tRNA(Cys) ligase (sepS) of Archaeoglobus fulgidus (strain ATCC 49558 / DSM 4304 / JCM 9628 / NBRC 100126 / VC-16).